The sequence spans 482 residues: MATLESPGMDDQAGDTETEALQSARWLYCGEPDDRQKAVLVQFSNGKLQNPGDMRFTLYNSTDLVNPRQRSHRIVAAETDRLSYVGNNFGTGALKCNALCRHFVGILNKTSGQMEVYDAELFNMQPLFAGMGTEVIKLGGQHLYLLAFCQPSKNLAEAGDLLLSRHRQGHCIAVLLDDDAIEREPPLENQNKTFRDKLDSCIEAFGSTKQKRSLNSRRMNKVGSESLNLSVAKAAESIIDTKGVNALVSDAMQDDLQDGVLYLPPCYADAAKPEDVYRFEDILSPAEYDALESPSEAFRKVTSEDILKMIEENSHCSYVIEMLKSLPIDEVHRNRQARSIWFLDALIRFRAQKVIKGKRALGPGIPHIINTKLLKQFTCLTYNNGRLQNLISSSMRAKITSYAIILALHINNFQVDLTALQKDLKLSEKRMIEIAKAMRLKISKQKVSLADGREESHRLGTLSVPLPPAQNSDRQSKRRKMN.

A Phosphoserine modification is found at serine 226. Lysine 436 carries the N6-acetyllysine modification. Residues glycine 460–asparagine 482 are disordered.

This sequence belongs to the eukaryotic RPA49/POLR1E RNA polymerase subunit family. Component of the RNA polymerase I (Pol I) complex consisting of 13 subunits: a ten-subunit catalytic core composed of POLR1A/RPA1, POLR1B/RPA2, POLR1C/RPAC1, POLR1D/RPAC2, POLR1H/RPA12, POLR2E/RPABC1, POLR2F/RPABC2, POLR2H/RPABC3, POLR2K/RPABC4 and POLR2L/RPABC5; a mobile stalk subunit POLR1F/RPA43 protruding from the core and additional subunits homologous to general transcription factors POLR1E/RPA49 and POLR1G/RPA34. Forms a heterodimer with POLR1G/RPA34. Interacts with POLR1G. Also binds UBTF/UBF. Interacts with PWP1. Acetylated at Lys-436 by CREBBP/CBP, leading to decreased RNA polymerase I transcription. In normal conditions, deacetylated by SIRT7, promoting the association of RNA polymerase I with the rDNA promoter region and coding region. In response to stress, SIRT7 is released from nucleoli leading to hyperacetylation of POLR1E/PAF53 and decreased association of RNA polymerase I with the rDNA promoter region.

Its subcellular location is the nucleus. It localises to the nucleolus. Component of RNA polymerase I (Pol I), a DNA-dependent RNA polymerase which synthesizes ribosomal RNA precursors using the four ribonucleoside triphosphates as substrates. Appears to be involved in the formation of the initiation complex at the promoter by mediating the interaction between Pol I and UBTF/UBF. In Mus musculus (Mouse), this protein is DNA-directed RNA polymerase I subunit RPA49 (Polr1e).